The chain runs to 1291 residues: Tat-binding homolog 7 (1291 aa).

The tract at residues 1 to 345 (MPRSDGFSPR…HNRGERERGR (345 aa)) is disordered. A compositionally biased stretch (basic and acidic residues) spans 64–82 (RYYEEEYHEAISSEEDERR). Residues 88–99 (SSNSMTYRQQVM) show a composition bias toward polar residues. Residues 226–257 (EEEEEGAEEDEQSGEKDPEEEEDDSSNAESSE) show a composition bias toward acidic residues. Basic residues predominate over residues 298–311 (NRHHRNRNGSRRRR). 432-439 (GPPGTGKT) is an ATP binding site. Residues 914 to 1022 (ALQRQMRLFF…DAIDDLIECE (109 aa)) form the Bromo domain. The interval 1110 to 1194 (KSEEGTSTST…MKDASKDSTP (85 aa)) is disordered. Over residues 1128–1142 (NKKKLLKKKKGQKKS) the composition is skewed to basic residues. The segment covering 1148–1164 (EEHDEDSTVEDAGEDTI) has biased composition (acidic residues). Residues 1168-1190 (LEIKKNQETPNSEHDIEMKDASK) are compositionally biased toward basic and acidic residues.

The protein belongs to the AAA ATPase family.

In terms of biological role, thought to form a complex that enhances transcription from repetitive DNA sequences by modulating chromatin structure. In Caenorhabditis elegans, this protein is Tat-binding homolog 7 (lex-1).